A 425-amino-acid chain; its full sequence is Trigger factor (425 aa).

The PPIase FKBP-type domain occupies 163–248 (GDTAVIDFEG…IHEIKTKELP (86 aa)).

It belongs to the FKBP-type PPIase family. Tig subfamily.

It is found in the cytoplasm. It carries out the reaction [protein]-peptidylproline (omega=180) = [protein]-peptidylproline (omega=0). Functionally, involved in protein export. Acts as a chaperone by maintaining the newly synthesized protein in an open conformation. Functions as a peptidyl-prolyl cis-trans isomerase. This Bacillus cereus (strain G9842) protein is Trigger factor.